We begin with the raw amino-acid sequence, 152 residues long: MSASLSRAAAALLRWGRSAGGGGLPGAGVRAASSGGQAEQLDALVKKDKVVVFLKGTPEQPQCGFSNAVVQILRLHGVRDYAAYNVLDDPELRQGIKDYSNWPTIPQVYLNGEFVGGCDILLQMHQNGDLVEELKKLGIRSALVDEKDQDSK.

A mitochondrion-targeting transit peptide spans 1–31 (MSASLSRAAAALLRWGRSAGGGGLPGAGVRA). Residues 38–141 (AEQLDALVKK…EELKKLGIRS (104 aa)) enclose the Glutaredoxin domain. Residue lysine 55 participates in glutathione binding. At lysine 55 the chain carries N6-succinyllysine. [2Fe-2S] cluster is bound at residue cysteine 63. Glutathione is bound by residues 93-97 (RQGIK), isoleucine 105, and 118-119 (CD). Serine 151 carries the phosphoserine modification.

It belongs to the glutaredoxin family. Monothiol subfamily. Homodimer. Interacts with ISCU. Interacts with BOLA1. As to expression, detected in bone, liver, muscle and kidney.

The protein resides in the mitochondrion matrix. Functionally, monothiol glutaredoxin involved in mitochondrial iron-sulfur (Fe/S) cluster transfer. Receives 2Fe/2S clusters from scaffold protein ISCU and mediates their transfer to apoproteins, to the 4Fe/FS cluster biosynthesis machinery, or export from mitochondrion. Required for normal regulation of hemoglobin synthesis by the iron-sulfur protein ACO1. In Mus musculus (Mouse), this protein is Glutaredoxin-related protein 5, mitochondrial (Glrx5).